The chain runs to 360 residues: DNA replication and repair protein RecF (360 aa).

30–37 serves as a coordination point for ATP; the sequence is GHNGSGKT.

It belongs to the RecF family.

Its subcellular location is the cytoplasm. In terms of biological role, the RecF protein is involved in DNA metabolism; it is required for DNA replication and normal SOS inducibility. RecF binds preferentially to single-stranded, linear DNA. It also seems to bind ATP. The chain is DNA replication and repair protein RecF from Actinobacillus pleuropneumoniae serotype 3 (strain JL03).